Here is a 203-residue protein sequence, read N- to C-terminus: MSELTKEHFATNVYYDRTFDRDAAKILPGEYYYTGKDMLIVTVLGSCVSACIRDRVTGVGGMNHFMLPDGGGDADSPISASARYGTYAMEILINDLLKAGARRENLEAKVFGGGNVLSGFSSINVGERNAQFVRNFLKVENIRIVAEDLNDVHPRKVYYFPRNGKVLVKKLRQLNNNTLVNREQDYANRLQSGSVSGDVELFS.

It belongs to the CheD family.

It catalyses the reaction L-glutaminyl-[protein] + H2O = L-glutamyl-[protein] + NH4(+). In terms of biological role, probably deamidates glutamine residues to glutamate on methyl-accepting chemotaxis receptors (MCPs), playing an important role in chemotaxis. The protein is Probable chemoreceptor glutamine deamidase CheD of Janthinobacterium sp. (strain Marseille) (Minibacterium massiliensis).